Reading from the N-terminus, the 600-residue chain is Zinc metalloproteinase-disintegrin-like cobrin (600 aa).

The N-terminal stretch at 1 to 8 is a signal peptide; sequence MIQLSWSS. A propeptide spanning residues 9-179 is cleaved from the precursor; sequence IILESGNVND…DEPIKKTSLL (171 aa). The 196-residue stretch at 193 to 388 folds into the Peptidase M12B domain; the sequence is KYIEFYMVVD…DRPQCILNKP (196 aa). Ca(2+) is bound by residues E196 and D280. Disulfide bonds link C304/C383, C344/C367, and C346/C351. Zn(2+) is bound by residues H329, H333, and H339. Ca(2+) is bound by residues C383, N386, I398, N401, F403, E405, E408, and D411. In terms of domain architecture, Disintegrin spans 396–482; sequence PPICGNYFVE…ECPTDVFQRN (87 aa). Intrachain disulfides connect C399–C428, C410–C423, C412–C418, C422–C445, C436–C442, C441–C467, C454–C474, C461–C492, C486–C497, C504–C554, C519–C562, C532–C542, C549–C588, and C582–C593. Residue N424 is glycosylated (N-linked (GlcNAc...) asparagine). The short motif at 460–462 is the D/ECD-tripeptide element; sequence DCD. Ca(2+)-binding residues include D462, L463, E465, D477, and V478.

It belongs to the venom metalloproteinase (M12B) family. P-III subfamily. P-IIIa sub-subfamily. Monomer. Zn(2+) is required as a cofactor. Expressed by the venom gland.

Its subcellular location is the secreted. Snake venom zinc metalloproteinase that may cleave complement protein C3 into C3c-like (C3o). The protein is Zinc metalloproteinase-disintegrin-like cobrin of Naja kaouthia (Monocled cobra).